A 135-amino-acid polypeptide reads, in one-letter code: Large ribosomal subunit protein bL19 (135 aa).

The protein belongs to the bacterial ribosomal protein bL19 family.

This protein is located at the 30S-50S ribosomal subunit interface and may play a role in the structure and function of the aminoacyl-tRNA binding site. This Xanthomonas axonopodis pv. citri (strain 306) protein is Large ribosomal subunit protein bL19.